A 399-amino-acid chain; its full sequence is Protein TWIN LOV 1 (399 aa).

One can recognise a PAS 1 domain in the interval 26-97 (LWIKEALEEL…MEIREAIREE (72 aa)). In terms of domain architecture, PAC 1 spans 98 to 153 (RSVQVSLLNYRKSGSPFWMLFHMCPVFGKDDGKVTNFVAVQVPISGREHHRKKLRN). Residues 249-320 (SLVISLGRIK…EMKECILKGQ (72 aa)) enclose the PAS 2 domain. Position 296 is an S-4a-FMN cysteine (C296). The region spanning 320–376 (QSCTVQILNYSNRKDKSSFWNLLHISPVRNASGKTAYFVGVQVEASCRNTEIKELRP) is the PAC 2 domain.

In terms of assembly, interacts with VTC2, VTC5 and BLH10. FMN binds covalently to cysteine after exposure to blue light and is reversed in the dark.

The chain is Protein TWIN LOV 1 (TLP1) from Arabidopsis thaliana (Mouse-ear cress).